A 116-amino-acid polypeptide reads, in one-letter code: NADH-ubiquinone oxidoreductase chain 3 (116 aa).

The next 3 helical transmembrane spans lie at 3–23, 56–76, and 87–107; these read LITT…TISF, FFLI…LLPL, and LTLI…IYEW.

Belongs to the complex I subunit 3 family.

It is found in the mitochondrion membrane. The catalysed reaction is a ubiquinone + NADH + 5 H(+)(in) = a ubiquinol + NAD(+) + 4 H(+)(out). In terms of biological role, core subunit of the mitochondrial membrane respiratory chain NADH dehydrogenase (Complex I) that is believed to belong to the minimal assembly required for catalysis. Complex I functions in the transfer of electrons from NADH to the respiratory chain. The immediate electron acceptor for the enzyme is believed to be ubiquinone. The protein is NADH-ubiquinone oxidoreductase chain 3 (MT-ND3) of Oncorhynchus mykiss (Rainbow trout).